Reading from the N-terminus, the 221-residue chain is Probable molybdenum cofactor guanylyltransferase (221 aa).

GTP is bound by residues 17-19 (LAG), lysine 29, aspartate 74, and aspartate 103. A Mg(2+)-binding site is contributed by aspartate 103.

The protein belongs to the MobA family. The cofactor is Mg(2+).

Its subcellular location is the cytoplasm. The enzyme catalyses Mo-molybdopterin + GTP + H(+) = Mo-molybdopterin guanine dinucleotide + diphosphate. Its function is as follows. Transfers a GMP moiety from GTP to Mo-molybdopterin (Mo-MPT) cofactor (Moco or molybdenum cofactor) to form Mo-molybdopterin guanine dinucleotide (Mo-MGD) cofactor. This Peptoclostridium acidaminophilum (Eubacterium acidaminophilum) protein is Probable molybdenum cofactor guanylyltransferase.